A 731-amino-acid polypeptide reads, in one-letter code: Nucleolar GTP-binding protein 2 (731 aa).

Met1 carries the N-acetylmethionine modification. The tract at residues 1-33 is disordered; sequence MVKPKYKGRSTINPSKASTNPDRVQGAGGQNMR. Residues 10-22 are compositionally biased toward polar residues; it reads STINPSKASTNPD. One can recognise a CP-type G domain in the interval 207–368; that stretch reads WGELYKVIDS…LIDCPGVVYP (162 aa). Residues 317-324 and 361-365 each bind GTP; these read GYPNVGKS and DCPGV. Residues 481–502 are disordered; the sequence is VVPEAAQNNPGEEVTETAGEGS. Ser504 is subject to Phosphoserine. The segment covering 555 to 589 has biased composition (acidic residues); sequence LEEELESFSDEEEEEQEQQRDDAEESSSEPEEENV. Disordered regions lie at residues 555–594 and 630–731; these read LEEE…NDTK and EKIF…RQKQ. Basic and acidic residues-rich tracts occupy residues 630–652 and 662–671; these read EKIF…DRAP and QREEEQEHSN. Composition is skewed to basic residues over residues 681–695 and 721–731; these read ERRR…KKVG and KHKRKKFRQKQ.

Belongs to the TRAFAC class YlqF/YawG GTPase family. NOG2 subfamily. Interacts with LYAR and RPL23A. Interacts with the nuclear importin-beta receptor and, at a lower extent, with importin-alpha. In terms of tissue distribution, widely expressed, with the highest expression level in testis.

It localises to the nucleus. It is found in the nucleolus. In terms of biological role, GTPase that associates with pre-60S ribosomal subunits in the nucleolus and is required for their nuclear export and maturation. May promote cell proliferation possibly by increasing p53/TP53 protein levels, and consequently those of its downstream product CDKN1A/p21, and decreasing RPL23A protein levels. The protein is Nucleolar GTP-binding protein 2 (GNL2) of Homo sapiens (Human).